The sequence spans 452 residues: Zinc finger protein 672 (452 aa).

C2H2-type zinc fingers lie at residues 14-36 (YSCS…ERAH), 42-64 (FRCL…RRTH), 70-92 (YICS…LGAH), and 99-122 (CPCR…RRQH). The segment at 128–150 (RRCPLCARTFRQSALLFHQARAH) adopts a C2H2-type 5; degenerate zinc-finger fold. 9 C2H2-type zinc fingers span residues 163 to 185 (HRCA…ARIH), 199 to 221 (HQCG…LQTH), 227 to 249 (FKCP…QRTH), 255 to 277 (YACG…RRSH), 283 to 305 (HACA…QRIH), 311 to 333 (FACP…RRTH), 339 to 361 (YRCE…RRNH), 367 to 389 (HKCP…RKTH), and 395 to 417 (AECA…QRAH).

Belongs to the krueppel C2H2-type zinc-finger protein family.

The protein localises to the nucleus. May be involved in transcriptional regulation. This chain is Zinc finger protein 672, found in Homo sapiens (Human).